The primary structure comprises 256 residues: Protein FixA (256 aa).

It belongs to the ETF beta-subunit/FixA family. Heterodimer of FixA and FixB.

The protein operates within amine and polyamine metabolism; carnitine metabolism. Required for anaerobic carnitine reduction. May bring reductant to CaiA. The protein is Protein FixA of Escherichia coli O81 (strain ED1a).